The sequence spans 258 residues: uncharacterized protein (258 aa).

This is an uncharacterized protein from Escherichia coli O157:H7.